A 221-amino-acid polypeptide reads, in one-letter code: UPF0328 protein ECU11_2110 (221 aa).

It belongs to the UPF0328 family.

The chain is UPF0328 protein ECU11_2110 from Encephalitozoon cuniculi (strain GB-M1) (Microsporidian parasite).